The sequence spans 339 residues: 5-dehydro-2-deoxygluconokinase (339 aa).

The protein belongs to the carbohydrate kinase PfkB family.

The catalysed reaction is 5-dehydro-2-deoxy-D-gluconate + ATP = 6-phospho-5-dehydro-2-deoxy-D-gluconate + ADP + H(+). Its pathway is polyol metabolism; myo-inositol degradation into acetyl-CoA; acetyl-CoA from myo-inositol: step 5/7. Catalyzes the phosphorylation of 5-dehydro-2-deoxy-D-gluconate (2-deoxy-5-keto-D-gluconate or DKG) to 6-phospho-5-dehydro-2-deoxy-D-gluconate (DKGP). The protein is 5-dehydro-2-deoxygluconokinase of Clostridium botulinum (strain Eklund 17B / Type B).